A 287-amino-acid polypeptide reads, in one-letter code: MGGGGGGFPEPEDSVLFRRGTGESDDSDVWDDTALIKAYDKAVASFKHALKNGDISEASEKPKGTPKRKSAKNKSQRKNTTSPSKQWKVGDNCCAIWSEDGCIYPATIASIDFKRETCVVVYTGYGNREEQNLSDLLSPTSEVANIEQNAQENENESQISTDESENSSRSPLNKPNNIRSRAAPWNSFLPPPPHMPRSGLGPGKSGLNFSGPPPPPPPPPHFLSRWLPPFPAGPPMIPPPPPICPDSLDDADALGSMLISWYMSGYHTGYYMGFKQSQKEGRYSHFN.

The interval 1 to 28 is disordered; the sequence is MGGGGGGFPEPEDSVLFRRGTGESDDSD. The interval 9–40 is P1 (binding site for GEMIN2); that stretch reads PEPEDSVLFRRGTGESDDSDVWDDTALIKAYD. Residue T21 is modified to Phosphothreonine. A phosphoserine mark is found at S24 and S27. K47 participates in a covalent cross-link: Glycyl lysine isopeptide (Lys-Gly) (interchain with G-Cter in SUMO2). Disordered stretches follow at residues 51–86 and 149–221; these read KNGD…PSKQ and NAQE…PPPH. Over residues 64 to 77 the composition is skewed to basic residues; that stretch reads GTPKRKSAKNKSQR. T65 bears the Phosphothreonine mark. T80 carries the phosphothreonine; by PKA modification. In terms of domain architecture, Tudor spans 86–146; that stretch reads QWKVGDNCCA…LSPTSEVANI (61 aa). The required for interaction with RPP20/POP7 stretch occupies residues 92 to 204; the sequence is NCCAIWSEDG…MPRSGLGPGK (113 aa). Residues 149-160 are compositionally biased toward low complexity; it reads NAQENENESQIS. The span at 167-179 shows a compositional bias: polar residues; sequence SSRSPLNKPNNIR. Residue K204 forms a Glycyl lysine isopeptide (Lys-Gly) (interchain with G-Cter in SUMO2) linkage. Residues 211-221 show a composition bias toward pro residues; it reads GPPPPPPPPPH. The segment at 234-261 is P2 (binding site for SM B); it reads PPMIPPPPPICPDSLDDADALGSMLISW. The tract at residues 273-287 is required for interaction with SYNCRIP; that stretch reads GFKQSQKEGRYSHFN.

Belongs to the SMN family. In terms of assembly, homooligomer; may form higher order homooligomers in the dimer to octamer range. Part of the core SMN complex that contains SMN1, GEMIN2/SIP1, DDX20/GEMIN3, GEMIN4, GEMIN5, GEMIN6, GEMIN7, GEMIN8 and STRAP/UNRIP. Part of the SMN-Sm complex that contains SMN1, GEMIN2/SIP1, DDX20/GEMIN3, GEMIN4, GEMIN5, GEMIN6, GEMIN7, GEMIN8, STRAP/UNRIP and the Sm proteins SNRPB, SNRPD1, SNRPD2, SNRPD3, SNRPE, SNRPF and SNRPG. Component of an import snRNP complex composed of KPNB1, RNUT1, SMN1 and ZNF259. Interacts with DDX20, FBL, NOLA1, RNUT1, SYNCRIP and with several spliceosomal snRNP core Sm proteins, including SNRPB, SNRPD1, SNRPD2, SNRPD3, SNRPE and ILF3. Interacts with GEMIN2; the interaction is direct. Interacts with GEMIN3; the interaction is direct. Interacts with GEMIN8; the interaction is direct. Interacts with SNRPB; the interaction is direct. Interacts (via Tudor domain) with SNRPD1 (via C-terminus); the interaction is direct. Interacts with SNRPD2; the interaction is direct. Interacts (via Tudor domain) with SNRPD3 (via C-terminus); the interaction is direct. Interacts with SNRPE; the interaction is direct. Interacts with OSTF1, LSM10, LSM11 and RPP20/POP7. Interacts (via C-terminal region) with ZPR1 (via C-terminal region). Interacts (via Tudor domain) with COIL. Interacts with SETX; recruits SETX to POLR2A. Interacts with POLR2A (via the C-terminal domain (CTD)). Interacts with PRMT5. Interacts with XRN2. Interacts (via C-terminus) with FMR1 (via C-terminus); the interaction is direct and occurs in a RNA-independent manner. Interacts (via Tudor domain) with SF3B2 ('Arg-508'-methylated form). Interacts with WRAP53/TCAB1. Interacts (via Tudor domain) with ELAVL4 in an RNA-independent manner; the interaction is required for localization of ELAVL4 to RNA granules. Interacts with FRG1.

It localises to the nucleus. The protein resides in the gem. It is found in the cajal body. The protein localises to the cytoplasm. Its subcellular location is the cytoplasmic granule. It localises to the perikaryon. The protein resides in the cell projection. It is found in the neuron projection. The protein localises to the axon. Its subcellular location is the myofibril. It localises to the sarcomere. The protein resides in the z line. The SMN complex catalyzes the assembly of small nuclear ribonucleoproteins (snRNPs), the building blocks of the spliceosome, and thereby plays an important role in the splicing of cellular pre-mRNAs. Most spliceosomal snRNPs contain a common set of Sm proteins SNRPB, SNRPD1, SNRPD2, SNRPD3, SNRPE, SNRPF and SNRPG that assemble in a heptameric protein ring on the Sm site of the small nuclear RNA to form the core snRNP (Sm core). In the cytosol, the Sm proteins SNRPD1, SNRPD2, SNRPE, SNRPF and SNRPG are trapped in an inactive 6S pICln-Sm complex by the chaperone CLNS1A that controls the assembly of the core snRNP. To assemble core snRNPs, the SMN complex accepts the trapped 5Sm proteins from CLNS1A forming an intermediate. Binding of snRNA inside 5Sm ultimately triggers eviction of the SMN complex, thereby allowing binding of SNRPD3 and SNRPB to complete assembly of the core snRNP. Within the SMN complex, SMN1 acts as a structural backbone and together with GEMIN2 it gathers the Sm complex subunits. Ensures the correct splicing of U12 intron-containing genes that may be important for normal motor and proprioceptive neurons development. Also required for resolving RNA-DNA hybrids created by RNA polymerase II, that form R-loop in transcription terminal regions, an important step in proper transcription termination. May also play a role in the metabolism of small nucleolar ribonucleoprotein (snoRNPs). The sequence is that of Survival motor neuron protein (SMN1) from Bos taurus (Bovine).